A 661-amino-acid chain; its full sequence is UvrABC system protein C (661 aa).

A GIY-YIG domain is found at 25–104; that stretch reads AEPGCYLMRD…IKNHQPHFNV (80 aa). The region spanning 214–249 is the UVR domain; the sequence is DELQHLLQEQMERYAERMDYESAARVRDQLQGLDQL. Residues 636–652 are compositionally biased toward basic and acidic residues; the sequence is FFHPSDEGTDADARAAL. Residues 636–661 are disordered; sequence FFHPSDEGTDADARAALEEQPQELSA.

It belongs to the UvrC family. Interacts with UvrB in an incision complex.

The protein resides in the cytoplasm. Functionally, the UvrABC repair system catalyzes the recognition and processing of DNA lesions. UvrC both incises the 5' and 3' sides of the lesion. The N-terminal half is responsible for the 3' incision and the C-terminal half is responsible for the 5' incision. The protein is UvrABC system protein C of Synechococcus sp. (strain CC9605).